The sequence spans 235 residues: Ribonuclease 3 (235 aa).

Positions 7 to 134 constitute an RNase III domain; the sequence is LKDLQNKIEI…LIASIYLDKG (128 aa). Glu47 provides a ligand contact to Mg(2+). Asp51 is an active-site residue. 2 residues coordinate Mg(2+): Asp120 and Glu123. Glu123 is an active-site residue. One can recognise a DRBM domain in the interval 161 to 230; that stretch reads DYKTKLQEII…AKKAIENMEV (70 aa).

This sequence belongs to the ribonuclease III family. In terms of assembly, homodimer. Mg(2+) is required as a cofactor.

It localises to the cytoplasm. It carries out the reaction Endonucleolytic cleavage to 5'-phosphomonoester.. Digests double-stranded RNA. Involved in the processing of primary rRNA transcript to yield the immediate precursors to the large and small rRNAs (23S and 16S). Processes some mRNAs, and tRNAs when they are encoded in the rRNA operon. Processes pre-crRNA and tracrRNA of type II CRISPR loci if present in the organism. The sequence is that of Ribonuclease 3 from Clostridium tetani (strain Massachusetts / E88).